Consider the following 51-residue polypeptide: Large ribosomal subunit protein eL39 (51 aa).

This sequence belongs to the eukaryotic ribosomal protein eL39 family.

The chain is Large ribosomal subunit protein eL39 from Hyperthermus butylicus (strain DSM 5456 / JCM 9403 / PLM1-5).